A 465-amino-acid polypeptide reads, in one-letter code: Respiratory transcription factor ZNF1 (465 aa).

A DNA-binding region (zn(2)-C6 fungal-type) is located at residues 8 to 34 (CDCCCIRRVKCDRKKPCKCCLQHNLQC).

Belongs to the MAL13 family.

It localises to the nucleus. Transcription factor that regulates respiratory growth and plays a critical role in stress adaptation during non-fermentative growth. Binds to promoters of genes involved in non-fermentative metabolism, including processes such as gluconeogenesis (PCK1, FBP1 and MDH2), glyoxylate shunt (MLS1 and ICL1) and the tricarboxylic acid cycle (ACO1). Plays a role in maintaining mitochondrial morphology and function. Also plays a role in tolerance to pH and osmotic stress, especially during the oxidative metabolism. In Saccharomyces cerevisiae (strain ATCC 204508 / S288c) (Baker's yeast), this protein is Respiratory transcription factor ZNF1.